A 347-amino-acid chain; its full sequence is GMP reductase (347 aa).

108-131 (ADFEKTKQILDLNPALNFVCIDVA) is an NADP(+) binding site. Positions 181 and 183 each coordinate K(+). The active-site Thioimidate intermediate is C186. 216–239 (IVSDGGCTTPGDVAKAFGGGADFV) is a binding site for NADP(+).

The protein belongs to the IMPDH/GMPR family. GuaC type 1 subfamily. As to quaternary structure, homotetramer.

It carries out the reaction IMP + NH4(+) + NADP(+) = GMP + NADPH + 2 H(+). Catalyzes the irreversible NADPH-dependent deamination of GMP to IMP. It functions in the conversion of nucleobase, nucleoside and nucleotide derivatives of G to A nucleotides, and in maintaining the intracellular balance of A and G nucleotides. This is GMP reductase from Escherichia coli O7:K1 (strain IAI39 / ExPEC).